The chain runs to 128 residues: S-adenosylmethionine decarboxylase proenzyme (128 aa).

The active-site Schiff-base intermediate with substrate; via pyruvic acid is S61. S61 is modified (pyruvic acid (Ser); by autocatalysis). Residue H66 is the Proton acceptor; for processing activity of the active site. The active-site Proton donor; for catalytic activity is the C81.

It belongs to the prokaryotic AdoMetDC family. Type 1 subfamily. In terms of assembly, heterotetramer of two alpha and two beta chains arranged as a dimer of alpha/beta heterodimers. Pyruvate is required as a cofactor. In terms of processing, is synthesized initially as an inactive proenzyme. Formation of the active enzyme involves a self-maturation process in which the active site pyruvoyl group is generated from an internal serine residue via an autocatalytic post-translational modification. Two non-identical subunits are generated from the proenzyme in this reaction, and the pyruvate is formed at the N-terminus of the alpha chain, which is derived from the carboxyl end of the proenzyme. The post-translation cleavage follows an unusual pathway, termed non-hydrolytic serinolysis, in which the side chain hydroxyl group of the serine supplies its oxygen atom to form the C-terminus of the beta chain, while the remainder of the serine residue undergoes an oxidative deamination to produce ammonia and the pyruvoyl group blocking the N-terminus of the alpha chain.

The enzyme catalyses S-adenosyl-L-methionine + H(+) = S-adenosyl 3-(methylsulfanyl)propylamine + CO2. The protein operates within amine and polyamine biosynthesis; S-adenosylmethioninamine biosynthesis; S-adenosylmethioninamine from S-adenosyl-L-methionine: step 1/1. In terms of biological role, catalyzes the decarboxylation of S-adenosylmethionine to S-adenosylmethioninamine (dcAdoMet), the propylamine donor required for the synthesis of the polyamines spermine and spermidine from the diamine putrescine. This Parasynechococcus marenigrum (strain WH8102) protein is S-adenosylmethionine decarboxylase proenzyme.